The sequence spans 205 residues: Isochorismatase domain-containing protein 2 (205 aa).

This sequence belongs to the isochorismatase family. As to quaternary structure, interacts with CDKN2A.

The protein resides in the cytoplasm. It is found in the nucleus. This is Isochorismatase domain-containing protein 2 (ISOC2) from Macaca fascicularis (Crab-eating macaque).